We begin with the raw amino-acid sequence, 179 residues long: Large ribosomal subunit protein uL5 (179 aa).

It belongs to the universal ribosomal protein uL5 family. In terms of assembly, part of the 50S ribosomal subunit; part of the 5S rRNA/L5/L18/L25 subcomplex. Contacts the 5S rRNA and the P site tRNA. Forms a bridge to the 30S subunit in the 70S ribosome.

Its function is as follows. This is one of the proteins that bind and probably mediate the attachment of the 5S RNA into the large ribosomal subunit, where it forms part of the central protuberance. In the 70S ribosome it contacts protein S13 of the 30S subunit (bridge B1b), connecting the 2 subunits; this bridge is implicated in subunit movement. Contacts the P site tRNA; the 5S rRNA and some of its associated proteins might help stabilize positioning of ribosome-bound tRNAs. The chain is Large ribosomal subunit protein uL5 from Haemophilus ducreyi (strain 35000HP / ATCC 700724).